A 232-amino-acid chain; its full sequence is Adenosylcobinamide-GDP ribazoletransferase (232 aa).

The next 7 helical transmembrane spans lie at 24–44 (LWAF…ILYL), 46–66 (IPLA…LLHL), 96–116 (IAGV…LSML), 117–137 (PFYA…LGLA), 153–173 (GMNG…YLPV), 174–194 (VIYD…WYVI), and 210–230 (GAMA…SLCF).

It belongs to the CobS family. Requires Mg(2+) as cofactor.

It localises to the cell membrane. It catalyses the reaction alpha-ribazole + adenosylcob(III)inamide-GDP = adenosylcob(III)alamin + GMP + H(+). The enzyme catalyses alpha-ribazole 5'-phosphate + adenosylcob(III)inamide-GDP = adenosylcob(III)alamin 5'-phosphate + GMP + H(+). Its pathway is cofactor biosynthesis; adenosylcobalamin biosynthesis; adenosylcobalamin from cob(II)yrinate a,c-diamide: step 7/7. In terms of biological role, joins adenosylcobinamide-GDP and alpha-ribazole to generate adenosylcobalamin (Ado-cobalamin). Also synthesizes adenosylcobalamin 5'-phosphate from adenosylcobinamide-GDP and alpha-ribazole 5'-phosphate. The chain is Adenosylcobinamide-GDP ribazoletransferase from Pyrococcus abyssi (strain GE5 / Orsay).